The following is a 198-amino-acid chain: Ribonuclease HII (198 aa).

Positions 10 to 198 (HLVAGVDEVG…PVKRALGLVC (189 aa)) constitute an RNase H type-2 domain. Residues Asp16, Glu17, and Asp108 each coordinate a divalent metal cation.

This sequence belongs to the RNase HII family. Requires Mn(2+) as cofactor. The cofactor is Mg(2+).

It is found in the cytoplasm. It carries out the reaction Endonucleolytic cleavage to 5'-phosphomonoester.. Functionally, endonuclease that specifically degrades the RNA of RNA-DNA hybrids. The protein is Ribonuclease HII of Enterobacter sp. (strain 638).